We begin with the raw amino-acid sequence, 483 residues long: Glutamyl-tRNA(Gln) amidotransferase subunit A (483 aa).

Catalysis depends on charge relay system residues Lys-76 and Ser-151. Ser-175 serves as the catalytic Acyl-ester intermediate.

This sequence belongs to the amidase family. GatA subfamily. In terms of assembly, heterotrimer of A, B and C subunits.

It catalyses the reaction L-glutamyl-tRNA(Gln) + L-glutamine + ATP + H2O = L-glutaminyl-tRNA(Gln) + L-glutamate + ADP + phosphate + H(+). Functionally, allows the formation of correctly charged Gln-tRNA(Gln) through the transamidation of misacylated Glu-tRNA(Gln) in organisms which lack glutaminyl-tRNA synthetase. The reaction takes place in the presence of glutamine and ATP through an activated gamma-phospho-Glu-tRNA(Gln). The protein is Glutamyl-tRNA(Gln) amidotransferase subunit A of Pseudomonas putida (strain GB-1).